Here is a 182-residue protein sequence, read N- to C-terminus: Putative pre-16S rRNA nuclease (182 aa).

This sequence belongs to the YqgF nuclease family.

It is found in the cytoplasm. Its function is as follows. Could be a nuclease involved in processing of the 5'-end of pre-16S rRNA. The protein is Putative pre-16S rRNA nuclease of Corynebacterium aurimucosum (strain ATCC 700975 / DSM 44827 / CIP 107346 / CN-1) (Corynebacterium nigricans).